A 336-amino-acid chain; its full sequence is Carbamoyl dehydratase HypE (336 aa).

Cysteine 336 carries the S-carbamoylcysteine; by HypF; alternate modification. Cysteine 336 carries the post-translational modification S-cyanocysteine; by autocatalysis; alternate.

It belongs to the HypE family. Homodimer. Forms a complex with HypF. Also forms a complex with HypC, or HybG, and HypD. Post-translationally, modified by HypF, which adds a carboxamido group to the thiolate of the C-terminal cysteine, yielding a protein-S-carboxamide. The carboxamido group is then dehydrated by HypE itself to yield a protein-thiocyanate.

It catalyses the reaction C-terminal S-carboxamide-L-cysteinyl-[HypE protein] + ATP = C-terminal S-cyanate-L-cysteinyl-[HypE protein] + ADP + phosphate + H(+). It functions in the pathway protein modification; [NiFe] hydrogenase maturation. Functionally, involved in the maturation of [NiFe] hydrogenases. Along with HypF, it catalyzes the synthesis of the CN ligands of the active site iron of [NiFe]-hydrogenases. HypE catalyzes the ATP-dependent dehydration of the carboxamido group attached to its C-terminal cysteine to a cyano group. The cyano group is then transferred from HypE to the HypC-HypD complex or the HybG-HypD complex. This chain is Carbamoyl dehydratase HypE, found in Escherichia coli (strain K12).